Reading from the N-terminus, the 361-residue chain is Probable dual-specificity RNA methyltransferase RlmN (361 aa).

Glu-91 functions as the Proton acceptor in the catalytic mechanism. Positions 97–329 (QHYGLSVCVT…KKKGGNCVVR (233 aa)) constitute a Radical SAM core domain. Cys-104 and Cys-340 form a disulfide bridge. [4Fe-4S] cluster-binding residues include Cys-111, Cys-115, and Cys-118. Residues 163 to 164 (GE), Ser-195, 218 to 220 (SLH), and Asn-296 contribute to the S-adenosyl-L-methionine site. Cys-340 acts as the S-methylcysteine intermediate in catalysis.

This sequence belongs to the radical SAM superfamily. RlmN family. Requires [4Fe-4S] cluster as cofactor.

The protein resides in the cytoplasm. The enzyme catalyses adenosine(2503) in 23S rRNA + 2 reduced [2Fe-2S]-[ferredoxin] + 2 S-adenosyl-L-methionine = 2-methyladenosine(2503) in 23S rRNA + 5'-deoxyadenosine + L-methionine + 2 oxidized [2Fe-2S]-[ferredoxin] + S-adenosyl-L-homocysteine. It catalyses the reaction adenosine(37) in tRNA + 2 reduced [2Fe-2S]-[ferredoxin] + 2 S-adenosyl-L-methionine = 2-methyladenosine(37) in tRNA + 5'-deoxyadenosine + L-methionine + 2 oxidized [2Fe-2S]-[ferredoxin] + S-adenosyl-L-homocysteine. Specifically methylates position 2 of adenine 2503 in 23S rRNA and position 2 of adenine 37 in tRNAs. The chain is Probable dual-specificity RNA methyltransferase RlmN from Streptococcus pneumoniae serotype 2 (strain D39 / NCTC 7466).